We begin with the raw amino-acid sequence, 705 residues long: Calpain-1 catalytic subunit (705 aa).

Residues 48–347 form the Calpain catalytic domain; it reads LFRDPQFPAG…FSRLEICNLT (300 aa). Residues C108, H265, and N289 contribute to the active site. The domain III stretch occupies residues 348–517; sequence PDALTKDELS…KQSDTAELDE (170 aa). The tract at residues 518-533 is linker; that stretch reads EISADLADEEEITEDD. In terms of domain architecture, EF-hand 1 spans 530–565; it reads TEDDIEDGFKNMFQQLAGEDMEISVFELKTILNRVI. The interval 534–704 is domain IV; sequence IEDGFKNMFQ…LAEWLLLTMC (171 aa). Residues D549, E551, E556, D589, D591, S593, R595, E600, D619, D621, S623, T625, and E630 each coordinate Ca(2+). EF-hand domains are found at residues 606 to 641 and 671 to 705; these read NKIRSWLTIFRQYDLDKSGTMSSYEMRMALESAGFK and VKLETMFRFFHSMDRDGTGTAVMNLAEWLLLTMCG.

Belongs to the peptidase C2 family. In terms of assembly, heterodimer of large (catalytic) and a small (regulatory) subunit. It depends on Ca(2+) as a cofactor. Post-translationally, the N-terminus is blocked. As to expression, ubiquitously expressed.

It is found in the cytoplasm. The protein resides in the cell membrane. It catalyses the reaction Broad endopeptidase specificity.. With respect to regulation, activated by micromolar concentrations of calcium and inhibited by calpastatin. Calcium-regulated non-lysosomal thiol-protease which catalyze limited proteolysis of substrates involved in cytoskeletal remodeling and signal transduction. The polypeptide is Calpain-1 catalytic subunit (Gallus gallus (Chicken)).